We begin with the raw amino-acid sequence, 223 residues long: Transmembrane protein 126 (223 aa).

Over 1 to 39 (MALSRAKPDELPRDAVVITEDQALKYQWKIITSWDKIGE) the chain is Mitochondrial matrix. Residues 40 to 62 (VWSLRYTPGILSALAAGTGAYIN) traverse the membrane as a helical segment. Over 63–78 (NHYRTKLRLGGHGRLS) the chain is Mitochondrial intermembrane. A helical membrane pass occupies residues 79 to 99 (TYLPIVAVPAIFTMLAHKFFI). Topologically, residues 100–123 (QRPILLNPLGECPVCIQMRSAAFQ) are mitochondrial matrix. A helical transmembrane segment spans residues 124–144 (TSLGIVYPTILAPFAAFLFAT). Residues 145–171 (RCYTYRIPSITENPREVFLLWRKFTRP) lie on the Mitochondrial intermembrane side of the membrane. A helical membrane pass occupies residues 172–192 (IVPALGTLIGLQALLTMFLTG). The Mitochondrial matrix segment spans residues 193-223 (QEDKQNFKLMLRMREIEHQVEEEHLPQRMDF).

It belongs to the TMEM126 family. As to quaternary structure, associates with mitochondrial complex I assembly intermediates during its biogenesis.

Its subcellular location is the mitochondrion membrane. In terms of biological role, as part of the MCIA complex, involved in the assembly of the mitochondrial complex I. This Drosophila melanogaster (Fruit fly) protein is Transmembrane protein 126.